The following is a 356-amino-acid chain: S-adenosylmethionine:tRNA ribosyltransferase-isomerase (356 aa).

The protein belongs to the QueA family. Monomer.

It localises to the cytoplasm. It catalyses the reaction 7-aminomethyl-7-carbaguanosine(34) in tRNA + S-adenosyl-L-methionine = epoxyqueuosine(34) in tRNA + adenine + L-methionine + 2 H(+). The protein operates within tRNA modification; tRNA-queuosine biosynthesis. Transfers and isomerizes the ribose moiety from AdoMet to the 7-aminomethyl group of 7-deazaguanine (preQ1-tRNA) to give epoxyqueuosine (oQ-tRNA). The protein is S-adenosylmethionine:tRNA ribosyltransferase-isomerase of Escherichia coli O8 (strain IAI1).